The primary structure comprises 581 residues: Intermediate filament protein ifa-3 (581 aa).

The segment at 1-33 is disordered; sequence MADPDSYRSSITSRPAFNRTVTSSTQNYGTPAS. A head region spans residues 1–74; that stretch reads MADPDSYRSS…RDDREREKKE (74 aa). Positions 7–33 are enriched in polar residues; sequence YRSSITSRPAFNRTVTSSTQNYGTPAS. The IF rod domain maps to 71-424; the sequence is EKKEITELND…RMLEGNSEEN (354 aa). The interval 75–106 is coil 1A; sequence ITELNDRLASYIGKVRFLAAQNRKLEADLNVL. Residues 107-120 form a linker 1 region; that stretch reads QSRFGKSTGSVKIM. The tract at residues 121–258 is coil 1B; it reads YEMEITTATN…RGFETELKDL (138 aa). Residues 259–276 form a linker 12 region; sequence QAQAARDTTSENREYFKN. The coil 2 stretch occupies residues 277–424; it reads ELMNSIRDIR…RMLEGNSEEN (148 aa). The tail stretch occupies residues 425–578; that stretch reads GLRQLVEKVV…THMQRQSQQT (154 aa). An LTD domain is found at 457 to 574; that stretch reads SRTSYQRSAK…EERATHMQRQ (118 aa).

The protein belongs to the intermediate filament family. In terms of assembly, forms some heteromeric filaments with ifb-1. As to expression, expressed in the embryonic and larval hypodermis. Also expressed in the ventral nerve cord of larvae.

The protein localises to the cytoplasm. Cytoplasmic intermediate filaments provide mechanical strength to cells. Essential protein, involved in attachment structures in epidermal cells that connect muscles to the external cuticle. Required for epidermal morphogenesis in embryos. Probable component of embryonic epidermal attachment structures. This is Intermediate filament protein ifa-3 (ifa-3) from Caenorhabditis elegans.